Consider the following 382-residue polypeptide: Carbamoyl phosphate synthase small chain (382 aa).

The CPSase stretch occupies residues 1-189 (MIKSALLVLE…ELPAAKNESE (189 aa)). L-glutamine contacts are provided by serine 47, glycine 241, and glycine 243. The region spanning 193–380 (HVVAYDYGVK…IDLIQTYRSS (188 aa)) is the Glutamine amidotransferase type-1 domain. Cysteine 269 (nucleophile) is an active-site residue. Residues leucine 270, glutamine 273, asparagine 311, glycine 313, and phenylalanine 314 each coordinate L-glutamine. Active-site residues include histidine 353 and glutamate 355.

Belongs to the CarA family. Composed of two chains; the small (or glutamine) chain promotes the hydrolysis of glutamine to ammonia, which is used by the large (or ammonia) chain to synthesize carbamoyl phosphate. Tetramer of heterodimers (alpha,beta)4.

The catalysed reaction is hydrogencarbonate + L-glutamine + 2 ATP + H2O = carbamoyl phosphate + L-glutamate + 2 ADP + phosphate + 2 H(+). The enzyme catalyses L-glutamine + H2O = L-glutamate + NH4(+). Its pathway is amino-acid biosynthesis; L-arginine biosynthesis; carbamoyl phosphate from bicarbonate: step 1/1. The protein operates within pyrimidine metabolism; UMP biosynthesis via de novo pathway; (S)-dihydroorotate from bicarbonate: step 1/3. In terms of biological role, small subunit of the glutamine-dependent carbamoyl phosphate synthetase (CPSase). CPSase catalyzes the formation of carbamoyl phosphate from the ammonia moiety of glutamine, carbonate, and phosphate donated by ATP, constituting the first step of 2 biosynthetic pathways, one leading to arginine and/or urea and the other to pyrimidine nucleotides. The small subunit (glutamine amidotransferase) binds and cleaves glutamine to supply the large subunit with the substrate ammonia. This chain is Carbamoyl phosphate synthase small chain, found in Pectobacterium atrosepticum (strain SCRI 1043 / ATCC BAA-672) (Erwinia carotovora subsp. atroseptica).